The sequence spans 132 residues: Acyl carrier protein 3, chloroplastic (132 aa).

The transit peptide at 1–49 (MASIAGSAVSFAKPVKAINTNSLSFSGARRGNAFLRLQPVPMRFAVCCS) directs the protein to the chloroplast. Residues 52–127 (QDTVEKVCEI…DAATLIDKLV (76 aa)) enclose the Carrier domain. O-(pantetheine 4'-phosphoryl)serine is present on Ser87.

It belongs to the acyl carrier protein (ACP) family. In terms of processing, 4'-phosphopantetheine is transferred from CoA to a specific serine of apo-ACP by acpS. This modification is essential for activity because fatty acids are bound in thioester linkage to the sulfhydryl of the prosthetic group.

It localises to the plastid. Its subcellular location is the chloroplast. It functions in the pathway lipid metabolism; fatty acid biosynthesis. Its function is as follows. Carrier of the growing fatty acid chain in fatty acid biosynthesis. The protein is Acyl carrier protein 3, chloroplastic (ACL1.3) of Hordeum vulgare (Barley).